An 803-amino-acid polypeptide reads, in one-letter code: MASLPHCLSARPLVVAAAPGRPGPGPGPWLRGGARRRNAAFSAGNAGRRVGLRRSVASAVEVGVGEDEEEGVEEEEEEVEAVVMPERYALGGACRVLAGMPAPLGATALDGGVNFAVYSAGASAASLCLFTPDDLEADEVTEEVPLDPLFNRTGNVWHVFIEGELHNMLYGYRFDGMFAPHCGQYFDVSNVVVDPYAKAVISRGEYGVPGPGGDCWPQMAGMIPLPYSTFDWQGDLPLRYPQKDLVIYEMHLRGFTKHSSSNVEHPGTYIGAISKLDYLKELGVNCVELMPCHEFNELEYFSCSSKMNFWGYSTINFFSPMIRYSSGGIRNCGRDAINEFKTFVREAHKRGIEVIMDVVFNHTAEGNEKGPILSFRGIDNSTYYMLAPKGEFYNYSGCGNTFNCNHPVVREFIVDCLRYWVTEMHVDGFRFDLASIMTRGCSLWDPVNVYGSPVEGDMTTTGTPLATPPLIDMISNDPILGDVKLIAEAWDAGGLYQVGQFPHWKIWSEWNGKYRDIVRQFIKGTDGFAGGFAECLCGSPHLYQAGGRKPWHSINFVCAHDGFTLADLVTYNKKYNSSNGEDNRDGENHNLSWNCGEEGEFAGLSVKRLRKRQMRNFFVSLMVSQGVPMFYMGDEYGHTKGGNNNTYCHDHYVNYFRWDKKEESSDLQRFCSLMTKFRKQCESLGLADFPTAQRLHWHGHQPGKPDWSETSRFVAFSTKDETKGEIYVAFNASHLPAVVGLPERPGYRWEPLVDTGKPAPYDFLTDDLPDRAHAVHLFSHFLNSNLYPMLSYSSIILELQPDD.

Residues 1-54 (MASLPHCLSARPLVVAAAPGRPGPGPGPWLRGGARRRNAAFSAGNAGRRVGLRR) constitute a chloroplast transit peptide. Aspartate 432 functions as the Nucleophile in the catalytic mechanism. Glutamate 488 serves as the catalytic Proton donor.

This sequence belongs to the glycosyl hydrolase 13 family. In terms of assembly, forms a homo-pentamer and a hetero-hexamer composed of five ISA1 and one ISA2. Interacts with FLO6/SIP4. Highly expressed in developing endosperm. Expressed at low levels in leaves.

Its subcellular location is the plastid. The protein resides in the chloroplast. The catalysed reaction is Hydrolysis of (1-&gt;6)-alpha-D-glucosidic branch linkages in glycogen, amylopectin and their beta-limit dextrins.. Its pathway is glycan biosynthesis; starch biosynthesis. With respect to regulation, inhibited by copper chloride, mercury chloride, ammonium molybdate and para-chloromercuribenzoate. Functionally, starch-debranching enzyme involved in amylopectin biosynthesis in endosperm. Functions by removing excess branches or improper branches that interfere with the formation of double helices of the cluster chains of amylopectin and crystallization of starch. Works as ISA1 homooligomer or together with ISA2 as heterooligomer. The heterooligomer ISA1 and ISA2 possesses higher affinity than the ISA1 homooligomer for various branched polyglucans in vitro, but no marked differences exist in chain preferences for debranching of amylopectin and phytoglycogen between these forms. The chain is Isoamylase 1, chloroplastic from Oryza sativa subsp. japonica (Rice).